Reading from the N-terminus, the 244-residue chain is Methylthioribulose-1-phosphate dehydratase (244 aa).

Cys89 lines the substrate pocket. Zn(2+) is bound by residues His107 and His109. Catalysis depends on Glu130, which acts as the Proton donor/acceptor. Residue His192 participates in Zn(2+) binding.

This sequence belongs to the aldolase class II family. MtnB subfamily. The cofactor is Zn(2+).

Its subcellular location is the cytoplasm. It carries out the reaction 5-(methylsulfanyl)-D-ribulose 1-phosphate = 5-methylsulfanyl-2,3-dioxopentyl phosphate + H2O. It functions in the pathway amino-acid biosynthesis; L-methionine biosynthesis via salvage pathway; L-methionine from S-methyl-5-thio-alpha-D-ribose 1-phosphate: step 2/6. Catalyzes the dehydration of methylthioribulose-1-phosphate (MTRu-1-P) into 2,3-diketo-5-methylthiopentyl-1-phosphate (DK-MTP-1-P). The chain is Methylthioribulose-1-phosphate dehydratase from Saccharomyces cerevisiae (strain ATCC 204508 / S288c) (Baker's yeast).